A 338-amino-acid chain; its full sequence is DNA-directed RNA polymerase subunit alpha (338 aa).

The alpha N-terminal domain (alpha-NTD) stretch occupies residues 1–234 (MIERNWNELI…DQLQIFITFE (234 aa)). Residues 250–338 (FNPALLKKVD…DLAKKFEDQI (89 aa)) are alpha C-terminal domain (alpha-CTD).

Belongs to the RNA polymerase alpha chain family. Homodimer. The RNAP catalytic core consists of 2 alpha, 1 beta, 1 beta' and 1 omega subunit. When a sigma factor is associated with the core the holoenzyme is formed, which can initiate transcription.

It catalyses the reaction RNA(n) + a ribonucleoside 5'-triphosphate = RNA(n+1) + diphosphate. In terms of biological role, DNA-dependent RNA polymerase catalyzes the transcription of DNA into RNA using the four ribonucleoside triphosphates as substrates. This Caulobacter sp. (strain K31) protein is DNA-directed RNA polymerase subunit alpha.